The primary structure comprises 832 residues: Thymine dioxygenase JBP1-A (832 aa).

Basic and acidic residues predominate over residues M1–M12. The tract at residues M1–K24 is disordered. Residues V80 to A282 form a thymine dioxygenase region. Positions 207, 209, and 257 each coordinate Fe cation. R273 provides a ligand contact to 2-oxoglutarate. Residues L409–S578 form a DNA-binding JBP1 domain region.

The protein belongs to the TET family. JBP1 subfamily. As to quaternary structure, monomer. Binds to DNA as a monomer. The cofactor is Fe(2+).

It is found in the nucleus. It catalyses the reaction thymine + 2-oxoglutarate + O2 = 5-hydroxymethyluracil + succinate + CO2. In terms of biological role, dioxygenase that catalyzes the first step of DNA base J (beta-d-glucosyl-HOMedU) biosynthesis by converting thymine to 5-hydroxymethyluracil (HOMedU). DNA base J is a hypermodified thymidine residue found in the genome of kinetoplastid parasites, which is localized primarily to repetitive DNA, namely the telomeres, and is implicated in the regulation of antigenic variation. Also specifically binds to base J-containing DNA (J-DNA). Involved in propagation and maintenance of DNA base J synthesis initiated by JBP2 by specifically binding already synthesized DNA base J and propagating J synthesis. Thymine dioxygenase activity and J-DNA-binding are independent functions. The chain is Thymine dioxygenase JBP1-A (JBP1A) from Trypanosoma cruzi (strain CL Brener).